A 178-amino-acid chain; its full sequence is Thymidine kinase (178 aa).

Residue 13–20 (GPMFAGKS) coordinates ATP. Glu85 functions as the Proton acceptor in the catalytic mechanism. Phe115 is a substrate binding site. Residues Cys140 and Cys143 each coordinate Zn(2+). 159-163 (IEIIG) lines the substrate pocket. Zn(2+)-binding residues include Cys172 and Cys175.

This sequence belongs to the thymidine kinase family.

It catalyses the reaction thymidine + ATP = dTMP + ADP + H(+). This Myxoma virus (strain Uriarra) (MYXV) protein is Thymidine kinase (TK).